The following is a 1657-amino-acid chain: Alsin (1657 aa).

3 RCC1 repeats span residues 60–109 (GEVY…VTDN), 110–168 (GVAY…LSIS), and 169–219 (REIW…LVQC). Residues 432 to 481 (TGAQAGSSAIGPEGLKDSREEQVKQESMQGKKSSSLVDIREEETEGGSRR) are disordered. A compositionally biased stretch (basic and acidic residues) spans 445 to 455 (GLKDSREEQVK). Residues 456-467 (QESMQGKKSSSL) show a composition bias toward polar residues. 4 positions are modified to phosphoserine: serine 465, serine 466, serine 483, and serine 492. The residue at position 510 (threonine 510) is a Phosphothreonine. 2 RCC1 repeats span residues 526-577 (TEVW…LTAK) and 578-628 (SQVY…LVDT). Residue lysine 533 is modified to N6-acetyllysine. In terms of domain architecture, DH spans 690-885 (GYIASLHELA…ECLALHLGRK (196 aa)). Residues 901–1007 (GKMTDSLRKP…RAISQAVDQA (107 aa)) enclose the PH domain. MORN repeat units lie at residues 1049–1071 (YDGR…DGKM), 1072–1094 (YSGM…NKAM), 1100–1122 (YVGH…SGEV), 1123–1145 (FEGC…KLTS), 1151–1173 (FIGQ…TRGE), 1175–1197 (YMGM…FGLY), 1198–1220 (YEGN…DDTI), and 1221–1244 (YEGE…NGDY). Serine 1335 is modified (phosphoserine). In terms of domain architecture, VPS9 spans 1513-1657 (KQPDIALLGF…YYQIQREKLN (145 aa)).

In terms of assembly, forms a heteromeric complex with ALS2CL. Interacts with ALS2CL.

Its function is as follows. May act as a GTPase regulator. Controls survival and growth of spinal motoneurons. This chain is Alsin (ALS2), found in Pan troglodytes (Chimpanzee).